We begin with the raw amino-acid sequence, 624 residues long: Actin-related protein 8 (624 aa).

Residue M1 is modified to N-acetylmethionine. Over residues 1–25 (MTQAEKGDTENGKEKGGEKEKEQRG) the composition is skewed to basic and acidic residues. A disordered region spans residues 1–29 (MTQAEKGDTENGKEKGGEKEKEQRGVKRP). Residues S55 and T56 each contribute to the ATP site. S132 carries the phosphoserine modification. Position 283–286 (283–286 (DVGD)) interacts with ATP. Position 412 is a phosphoserine (S412). Positions 430 to 462 (SKQEQSAKATADRKSASKPIGFEGDLRGQSSDL) are disordered.

It belongs to the actin family. ARP8 subfamily. As to quaternary structure, component of the chromatin remodeling INO80 complex; specifically part of a complex module associated with the DBINO domain of INO80. Exists as monomers and dimers, but the dimer is most probably the biologically relevant form required for stable interactions with histones that exploits the twofold symmetry of the nucleosome core.

Its subcellular location is the nucleus. The protein resides in the chromosome. Functionally, plays an important role in the functional organization of mitotic chromosomes. Exhibits low basal ATPase activity, and unable to polymerize. Proposed core component of the chromatin remodeling INO80 complex which is involved in transcriptional regulation, DNA replication and probably DNA repair. Required for the recruitment of INO80 (and probably the INO80 complex) to sites of DNA damage Strongly prefer nucleosomes and H3-H4 tetramers over H2A-H2B dimers, suggesting it may act as a nucleosome recognition module within the complex. This Pongo abelii (Sumatran orangutan) protein is Actin-related protein 8 (ACTR8).